We begin with the raw amino-acid sequence, 502 residues long: Maturase K (502 aa).

Belongs to the intron maturase 2 family. MatK subfamily.

It localises to the plastid. The protein resides in the chloroplast. Its function is as follows. Usually encoded in the trnK tRNA gene intron. Probably assists in splicing its own and other chloroplast group II introns. This is Maturase K from Spiraea cantoniensis (Reeve's meadowsweet).